Reading from the N-terminus, the 124-residue chain is MDTTHNDTTPQRLMITDMRPLSLETTITSLTRDIITHRFIYLINHECIVRKLDERQATFTFLVNYEMKLLHKVGSTKYKKYTEYNTKYGTFPMPIFINHDGFLECIGIKPTKHTPIIYKYDLNP.

A DLNP; interaction with MAP1B motif is present at residues D121–P124.

Belongs to the pneumovirus non-structural protein 2 family. As to quaternary structure, monomer (instable). Homomultimer. Heteromultimer with NS1. Interacts with host RIGI (via N-terminus); this interaction prevents host signaling pathway involved in interferon production. Interacts with host MAP1B/microtubule-associated protein 1B.

It localises to the host mitochondrion. In terms of biological role, plays a major role in antagonizing the type I IFN-mediated antiviral response. Acts cooperatively with NS1 to repress activation and nuclear translocation of host IFN-regulatory factor IRF3. Interacts with the host cytoplasmic sensor of viral nucleic acids RIGI and prevents the interaction with its downstream partner MAVS. Together with NS2, participates in the proteasomal degradation of host STAT2, IRF3, IRF7, TBK1 and RIGI through a NS-degradasome involving CUL2 and Elongin-C. The degradasome requires an intact mitochondrial MAVS. Induces host SOCS1 expression. Induces activation of NF-kappa-B. Suppresses premature apoptosis by an NF-kappa-B-dependent, interferon-independent mechanism promoting continued viral replication. This is Non-structural protein 2 (1B) from Homo sapiens (Human).